We begin with the raw amino-acid sequence, 212 residues long: Adenylate kinase (212 aa).

10-15 serves as a coordination point for ATP; sequence GAGKGT. The interval 30–59 is NMP; the sequence is AIGDIFRTIIKTSTSEAELINNYVRQGELI. AMP is bound by residues Arg36, 57–59, 85–88, and Gln92; these read ELI and GYPR. Positions 122 to 160 are LID; that stretch reads GRYSCKNCGKIYNRYFLQPKTDNVCDVCGSSTFDYRKDD. Arg123 serves as a coordination point for ATP. Cys126 and Cys129 together coordinate Zn(2+). 132–133 contributes to the ATP binding site; it reads IY. Zn(2+) contacts are provided by Cys146 and Cys149. AMP contacts are provided by Arg157 and Arg168. Lys196 serves as a coordination point for ATP.

This sequence belongs to the adenylate kinase family. In terms of assembly, monomer.

Its subcellular location is the cytoplasm. The catalysed reaction is AMP + ATP = 2 ADP. It functions in the pathway purine metabolism; AMP biosynthesis via salvage pathway; AMP from ADP: step 1/1. Catalyzes the reversible transfer of the terminal phosphate group between ATP and AMP. Plays an important role in cellular energy homeostasis and in adenine nucleotide metabolism. The chain is Adenylate kinase from Rickettsia rickettsii (strain Iowa).